A 385-amino-acid polypeptide reads, in one-letter code: MSWQQRVDDALTARRATDTLRRRYVVSQGAGRWLVANGRQYLNFSSNDYLGLSQHPQIIRAWQQAATRFGVGSGGSGHISGYSVAHQALEEELAQWLGYPRALLFISGFAANQAVITALMKKNDRIVADRLSHASLLEAANLSPAQLRRFIHNDTQHLSRLLQSPCPGQQLVVAEGIYSMDGDSAPLAEIQQITHKHHAWLLVDDAHGIGVTGVEGRGTCWLQGMKPELLVVTFGKGFGVSGAAVLCSESVANYLLQFARHLVYSTSMPPAQAQALSASLAVIRSDEGCERREKLADLVKRFRAGVNASRFTLLNAHSAIQPLVVGDNIRALRLAEALRRRGCWVSAIRPPTVPAGTARLRLTLTQSHEACDIDRLLEVLHGAGE.

Substrate is bound at residue R21. 108–109 (GF) serves as a coordination point for pyridoxal 5'-phosphate. H133 contributes to the substrate binding site. Pyridoxal 5'-phosphate is bound by residues S179, H207, and T233. K236 carries the post-translational modification N6-(pyridoxal phosphate)lysine. T352 lines the substrate pocket.

Belongs to the class-II pyridoxal-phosphate-dependent aminotransferase family. BioF subfamily. In terms of assembly, homodimer. It depends on pyridoxal 5'-phosphate as a cofactor.

The enzyme catalyses 6-carboxyhexanoyl-[ACP] + L-alanine + H(+) = (8S)-8-amino-7-oxononanoate + holo-[ACP] + CO2. It participates in cofactor biosynthesis; biotin biosynthesis. Functionally, catalyzes the decarboxylative condensation of pimeloyl-[acyl-carrier protein] and L-alanine to produce 8-amino-7-oxononanoate (AON), [acyl-carrier protein], and carbon dioxide. The protein is 8-amino-7-oxononanoate synthase of Salmonella arizonae (strain ATCC BAA-731 / CDC346-86 / RSK2980).